A 28-amino-acid polypeptide reads, in one-letter code: Conotoxin Cl1.2 (28 aa).

In terms of processing, contains 2 disulfide bonds. As to expression, expressed by the venom duct.

It is found in the secreted. This chain is Conotoxin Cl1.2, found in Californiconus californicus (California cone).